A 488-amino-acid polypeptide reads, in one-letter code: Catalase (488 aa).

The segment at 1-24 is disordered; it reads MTDRRNLTTNQGVPIGDNQNSMTA. Residues 7-23 are compositionally biased toward polar residues; it reads LTTNQGVPIGDNQNSMT. Residues His-55 and Asn-128 contribute to the active site. Tyr-338 provides a ligand contact to heme.

This sequence belongs to the catalase family. Requires heme as cofactor.

The protein localises to the cytoplasm. It carries out the reaction 2 H2O2 = O2 + 2 H2O. In terms of biological role, decomposes hydrogen peroxide into water and oxygen; serves to protect cells from the toxic effects of hydrogen peroxide. The chain is Catalase (kat) from Listeria seeligeri.